Consider the following 336-residue polypeptide: MRTETASLLLLAALSVAEELTPNDVPLACANMCGPIVELSYKCDVDGTDELRKLKRRKLFSPQQQQQQQQQQQQSAPKAKRQADPEPQAPAPVPSSTNNQQAADVIFIPGSIGKFKTIPTPLPPADTGVPSMAVTPAAPAPTLPVLDLRPTTTPTNLNPNLPILATPILPSVPASTPLATASSTQVPLPVGNEADAGDGVDAGPAPSNSLNGNVGDMVDDAGNLWPGQKGRQAASDLETACICSNTSFNVRRVAGLCGDCLEQVSGDQGPMRAILASCNFTTERYEPEKESLVANVRVEATKPSFTQTAAASYSWRVSGPTWAVVVGAGMLLGMGW.

The signal sequence occupies residues 1-19; that stretch reads MRTETASLLLLAALSVAEE. Disordered stretches follow at residues 59-99 and 189-230; these read LFSP…STNN and PVGN…GQKG. Residues 63-74 show a composition bias toward low complexity; the sequence is QQQQQQQQQQQQ.

As to quaternary structure, interacts with A.thaliana CBP60G; the interaction is direct. Interacts with A.thaliana SARD1. Interacts with G.hirsutum CBP60B.

The protein localises to the secreted. It is found in the host nucleus. Its function is as follows. Effector that binds transcription regulators in the host plant to suppress the host's innate immune response. Inhibits the host plant transcription regulators CBP60G and SARD1. The polypeptide is Effector SCP41 (Verticillium dahliae (strain VdLs.17 / ATCC MYA-4575 / FGSC 10137) (Verticillium wilt)).